The primary structure comprises 266 residues: Type III pantothenate kinase (266 aa).

Residue 9–16 coordinates ATP; the sequence is DAGNSRIK. Substrate is bound by residues Tyr96 and 103 to 106; that span reads GSDR. Asp105 serves as the catalytic Proton acceptor. Thr129 contacts ATP. Thr189 serves as a coordination point for substrate.

The protein belongs to the type III pantothenate kinase family. Homodimer. NH4(+) is required as a cofactor. It depends on K(+) as a cofactor.

It localises to the cytoplasm. The enzyme catalyses (R)-pantothenate + ATP = (R)-4'-phosphopantothenate + ADP + H(+). Its pathway is cofactor biosynthesis; coenzyme A biosynthesis; CoA from (R)-pantothenate: step 1/5. Its function is as follows. Catalyzes the phosphorylation of pantothenate (Pan), the first step in CoA biosynthesis. This Burkholderia lata (strain ATCC 17760 / DSM 23089 / LMG 22485 / NCIMB 9086 / R18194 / 383) protein is Type III pantothenate kinase.